Here is a 20-residue protein sequence, read N- to C-terminus: Large ribosomal subunit protein uL5 (20 aa).

The protein belongs to the universal ribosomal protein uL5 family. In terms of assembly, part of the 50S ribosomal subunit; part of the 5S rRNA/L5/L18/L25 subcomplex. Contacts the 5S rRNA and the P site tRNA. Forms a bridge to the 30S subunit in the 70S ribosome.

In terms of biological role, this is one of the proteins that bind and probably mediate the attachment of the 5S RNA into the large ribosomal subunit, where it forms part of the central protuberance. In the 70S ribosome it contacts protein S13 of the 30S subunit (bridge B1b), connecting the two subunits; this bridge is implicated in subunit movement. Contacts the P site tRNA; the 5S rRNA and some of its associated proteins might help stabilize positioning of ribosome-bound tRNAs. The polypeptide is Large ribosomal subunit protein uL5 (rplE) (Bacillus cereus).